The sequence spans 735 residues: MGSENSALKSYTLRESPFTLPSGLAVYPAILQDGKCASVFVYKRENEDKVNKAAKHLKTLRHPCLLRFLSCTVEADGIHLVTERVQPLEVALETLSPAEVCAGIYDILLALIFLHDRGHLTHNNVCLSSVFVSEDGHWKLGGMETVCQVPQATPEFLRNIQSVRDPASIPPEEMSPEFSGLPESHGHARDAYAFGALVDSLLPIFNEQVSADVLSSFLQILHSALLNPMPECRPALSTLLSHDFFRNDFLEVVNFLKSLTLKSEDEKTEFFKFLLDRVSCLSEELIASRLVPLLLNQLVFAEPVAVKSFLPYLLGPKKENAPGETPCLLSPALFQSRVIPVLLRLFEVHEEHVRMVLLSHIEAYVEHFTQEQLKKVILPQVLLGLRDTSNSIVAITLRSLAVLVSLLGPEVVVGGERTKIFKRTAPSFTKTSDLSPEGSPMHVVCSQQSRVSKVLEDPSSNVFPKWLSGNVPSSSRKRIQEECYSSLSQTGDQFSHTIKFPMNGLSDVKNTSEDNGSFPAGSNKPEEWPDWSEPEEPEQQPASIHRWPREPCDVAESQHTNLTAEEVTWDDGEASFGTEINSTATASAPVPVTSGGQSTSAALVPLTEESKPLQSSPSSKTSHRQHEEVKPPQVSQERPLKAPSGLGLGEEFTIQVKKKPVQDPELDWFADMIPEIKPSGTFLILPELRTEVMVPDKDNVSSLMQFSSKFAATEMTEGEAEGWEGEELAWEDNNW.

The N-myristoyl glycine moiety is linked to residue G2. In terms of domain architecture, Protein kinase spans 2-245; sequence GSENSALKSY…LSTLLSHDFF (244 aa). 4 HEAT repeats span residues 194–249, 285–323, 333–370, and 372–409; these read FGAL…RNDF, LIASRLVPLLLNQLVFAEPVAVKSFLPYLLGPKKENAPG, LFQSRVIPVLLRLFEVHEEHVRMVLLSHIEAYVEHFTQ, and QLKKVILPQVLLGLRDTSNSIVAITLRSLAVLVSLLGP. S439 is modified (phosphoserine). Disordered stretches follow at residues 505 to 545 and 604 to 648; these read LSDV…ASIH and VPLT…GLGL. A compositionally biased stretch (acidic residues) spans 528–538; the sequence is WPDWSEPEEPE. The tract at residues 547-735 is interaction with EZR; sequence WPREPCDVAE…EELAWEDNNW (189 aa). S701 bears the Phosphoserine mark.

It belongs to the protein kinase superfamily. As to quaternary structure, interacts with EZR/VIL2 C-terminal domain. Post-translationally, may be myristoylated; myristoylation may target it to Golgi compartment.

The protein resides in the cytoplasm. It localises to the golgi apparatus. The protein localises to the cell projection. Its subcellular location is the lamellipodium. In terms of biological role, may play a role in regulating cell adhesion/migration complexes in migrating cells. This Mus musculus (Mouse) protein is Protein-associating with the carboxyl-terminal domain of ezrin (Scyl3).